The primary structure comprises 122 residues: Small ribosomal subunit protein uS13 (122 aa).

Residues 94–122 (KKLPVRGQRTHTNARTRKGPAKPIAGKKK) form a disordered region.

The protein belongs to the universal ribosomal protein uS13 family. In terms of assembly, part of the 30S ribosomal subunit. Forms a loose heterodimer with protein S19. Forms two bridges to the 50S subunit in the 70S ribosome.

In terms of biological role, located at the top of the head of the 30S subunit, it contacts several helices of the 16S rRNA. In the 70S ribosome it contacts the 23S rRNA (bridge B1a) and protein L5 of the 50S subunit (bridge B1b), connecting the 2 subunits; these bridges are implicated in subunit movement. Contacts the tRNAs in the A and P-sites. This is Small ribosomal subunit protein uS13 from Hyphomonas neptunium (strain ATCC 15444).